Consider the following 366-residue polypeptide: tRNA/tmRNA (uracil-C(5))-methyltransferase (366 aa).

S-adenosyl-L-methionine-binding residues include glutamine 189, tyrosine 217, asparagine 222, glutamate 238, and aspartate 298. Cysteine 323 functions as the Nucleophile in the catalytic mechanism. The active-site Proton acceptor is glutamate 357.

Belongs to the class I-like SAM-binding methyltransferase superfamily. RNA M5U methyltransferase family. TrmA subfamily.

It catalyses the reaction uridine(54) in tRNA + S-adenosyl-L-methionine = 5-methyluridine(54) in tRNA + S-adenosyl-L-homocysteine + H(+). The enzyme catalyses uridine(341) in tmRNA + S-adenosyl-L-methionine = 5-methyluridine(341) in tmRNA + S-adenosyl-L-homocysteine + H(+). Its function is as follows. Dual-specificity methyltransferase that catalyzes the formation of 5-methyluridine at position 54 (m5U54) in all tRNAs, and that of position 341 (m5U341) in tmRNA (transfer-mRNA). In Shewanella putrefaciens (strain CN-32 / ATCC BAA-453), this protein is tRNA/tmRNA (uracil-C(5))-methyltransferase.